A 229-amino-acid chain; its full sequence is Matrix protein (229 aa).

A compositionally biased stretch (low complexity) spans methionine 1–leucine 10. Positions methionine 1–alanine 23 are disordered. Residues serine 2 to leucine 4 carry the dynamin binding motif. Positions proline 24–tyrosine 27 match the PPXY motif motif. The PTAP/PSAP motif signature appears at proline 37–proline 40.

The protein belongs to the vesiculoviruses matrix protein family. In terms of assembly, homomultimer. Interacts with viral nucleocapsid; this interaction contributes to the virion assembly. Interacts with the viral envelope glycoprotein; this interaction contributes to the virion assembly. Interacts with host RAE1-NUP98 complex. Interacts with host NEDD4 and TSG101. Interacts with host dynamin. Interacts with host NDUFAF4; the interaction inhibits viral propagation and is independent of interferon activation. Interacts with host GTF2H5; the interaction may inhibit host transcription. Post-translationally, phosphorylated by host.

It is found in the virion. It localises to the host endomembrane system. Its subcellular location is the host nucleus membrane. The protein resides in the host nucleus. The protein localises to the host cytoplasm. Forms a double layer around the helical nucleocapsid, the inner matrix layer binding to the N helix and the outer matrix layer binding to the envelope glycoprotein. Plays a major role in assembly and budding of virion, by recruiting cellular partners of the ESCRT complexes that play a key role in releasing the budding particle from the host membrane. Condensates the ribonucleocapsid core during virus assembly. Inhibits the host mRNA nuclear export thereby inducing the shut off of cellular transcription and preventing the interferon signaling and the establishment of antiviral state in infected cells. This shutoff presumably inhibits interferon signaling and thus establishment of antiviral state in virus infected cells. Induces cell-rounding, cytoskeleton disorganization and apoptosis in infected cell. Inhibits host transcription, possibly through interaction with host DNA repair factor IIH/TFIIH GTF2H5 subunit. The chain is Matrix protein (M) from Vesicular stomatitis Indiana virus (strain 98COE North America) (VSIV).